A 329-amino-acid chain; its full sequence is Tetraacyldisaccharide 4'-kinase (329 aa).

57–64 (TAGGSGKT) contributes to the ATP binding site.

The protein belongs to the LpxK family.

The enzyme catalyses a lipid A disaccharide + ATP = a lipid IVA + ADP + H(+). Its pathway is glycolipid biosynthesis; lipid IV(A) biosynthesis; lipid IV(A) from (3R)-3-hydroxytetradecanoyl-[acyl-carrier-protein] and UDP-N-acetyl-alpha-D-glucosamine: step 6/6. In terms of biological role, transfers the gamma-phosphate of ATP to the 4'-position of a tetraacyldisaccharide 1-phosphate intermediate (termed DS-1-P) to form tetraacyldisaccharide 1,4'-bis-phosphate (lipid IVA). The protein is Tetraacyldisaccharide 4'-kinase of Thiobacillus denitrificans (strain ATCC 25259 / T1).